The following is a 209-amino-acid chain: MILNDLGVVDYAAAFSLQERIADGVYRNATPETLLLLEHHPVYTIGRAGCEENILDHSIQAIRISRGGDVTFHGPGQLVGYPLINLRPRGCDLRHYLRFLEELLISVVADFGVSAFRVPGKTGVWTDQGKLAAIGVGVRHWVTMHGFAMNVNNDLSSFERINPCGIATCPIASLERLCGCPIAMDEVKSRVAGRFQGLLDEWLPAAGAL.

The 176-residue stretch at 28–203 (NATPETLLLL…RFQGLLDEWL (176 aa)) folds into the BPL/LPL catalytic domain. Residues 66–73 (RGGDVTFH), 133–135 (AIG), and 146–148 (GFA) each bind substrate. The Acyl-thioester intermediate role is filled by cysteine 164.

The protein belongs to the LipB family.

It localises to the cytoplasm. It catalyses the reaction octanoyl-[ACP] + L-lysyl-[protein] = N(6)-octanoyl-L-lysyl-[protein] + holo-[ACP] + H(+). Its pathway is protein modification; protein lipoylation via endogenous pathway; protein N(6)-(lipoyl)lysine from octanoyl-[acyl-carrier-protein]: step 1/2. Functionally, catalyzes the transfer of endogenously produced octanoic acid from octanoyl-acyl-carrier-protein onto the lipoyl domains of lipoate-dependent enzymes. Lipoyl-ACP can also act as a substrate although octanoyl-ACP is likely to be the physiological substrate. This chain is Octanoyltransferase, found in Pelobacter propionicus (strain DSM 2379 / NBRC 103807 / OttBd1).